A 730-amino-acid chain; its full sequence is MQAQESLTLEDVAVDFTWEEWQFLSPAQKDLYRDVMLENYSNLVAVGFQASKQDALSKLERGEETCTTEDEIYSRICFEIRKIDDPLQHHLQNRSIQKSVKQCHEQNMFGNIVNQNKGHFLLKQDRDTFDLHEKPLKSILSFENQKRSSGLKNSAEFNGDGKSLFHANHKQFYTEMKFPATAKPINKSQFIKQQRTHNIENAHVCSECGKAFLKLSQFIDHQRVHNGEKPHVCSMCGKAFSRKSRLMDHQRTHTELKHYECTECDKTFLKKSQLNIHQKTHMGEKPYTCSECGKAFIKKCRLIYHQRTHTGEKPHGCSVCGKAFSTKFSLTTHQKTHTGEKPYICSECGKGFIEKRRLIAHHRTHTGEKPFICNKCGKGFTLKNSLITHQQTHTEEKLYTCSECGKGFSMKHCLMVHQRTHTGEKPYKCNECGKGFALKSPLIRHQRTHTGEKPYVCTECRKGFTMKSDLIVHQRTHTAEKPYICNDCGKGFTVKSRLIVHQRTHTGEKPYVCGECGKGFPAKIRLMGHQRTHTGEKPYICDECGKGFTEKSHLNVHRRTHTGEKPYVCSECGKGLTGKSMLIAHQRTHTGEKPYICNECGKGFTMKSTLSIHQQTHTGEKPYKCNECDKSFRKKTCLIQHQRFHTGKTSFACTECGKFSLRKNDLITHQRIHTGEKPYKCSDCGKAFTTKSGLNVHQRKHTGERPYGCSDCGKAFAHLSILVKHKRIHR.

The KRAB domain maps to 7-78 (LTLEDVAVDF…EDEIYSRICF (72 aa)). 19 consecutive C2H2-type zinc fingers follow at residues 203–225 (HVCS…QRVH), 231–253 (HVCS…QRTH), 259–281 (YECT…QKTH), 287–309 (YTCS…QRTH), 315–337 (HGCS…QKTH), 343–365 (YICS…HRTH), 371–393 (FICN…QQTH), 399–421 (YTCS…QRTH), 427–449 (YKCN…QRTH), 455–477 (YVCT…QRTH), 483–505 (YICN…QRTH), 511–533 (YVCG…QRTH), 539–561 (YICD…RRTH), 567–589 (YVCS…QRTH), 595–617 (YICN…QQTH), 623–645 (YKCN…QRFH), 651–673 (FACT…QRIH), 679–701 (YKCS…QRKH), and 707–729 (YGCS…KRIH).

It belongs to the krueppel C2H2-type zinc-finger protein family.

The protein resides in the nucleus. May be involved in transcriptional regulation. The protein is Zinc finger protein 615 (ZNF615) of Pongo abelii (Sumatran orangutan).